Here is a 318-residue protein sequence, read N- to C-terminus: uncharacterized protein (318 aa).

A run of 2 helical transmembrane segments spans residues 230-250 (VWTY…SFLI) and 264-284 (ASLM…LGVI).

The protein belongs to the glycosyltransferase 2 family. GtrB subfamily.

It is found in the cell membrane. This is an uncharacterized protein from Synechocystis sp. (strain ATCC 27184 / PCC 6803 / Kazusa).